The primary structure comprises 232 residues: Ubiquinone biosynthesis O-methyltransferase (232 aa).

Positions 36, 55, 76, and 120 each coordinate S-adenosyl-L-methionine.

It belongs to the methyltransferase superfamily. UbiG/COQ3 family.

The catalysed reaction is a 3-demethylubiquinol + S-adenosyl-L-methionine = a ubiquinol + S-adenosyl-L-homocysteine + H(+). The enzyme catalyses a 3-(all-trans-polyprenyl)benzene-1,2-diol + S-adenosyl-L-methionine = a 2-methoxy-6-(all-trans-polyprenyl)phenol + S-adenosyl-L-homocysteine + H(+). The protein operates within cofactor biosynthesis; ubiquinone biosynthesis. Its function is as follows. O-methyltransferase that catalyzes the 2 O-methylation steps in the ubiquinone biosynthetic pathway. The chain is Ubiquinone biosynthesis O-methyltransferase from Paraburkholderia phytofirmans (strain DSM 17436 / LMG 22146 / PsJN) (Burkholderia phytofirmans).